An 88-amino-acid chain; its full sequence is MIKNAFISFQEQKEESKGSVEFQVFSFTNKIRRLTSHLELHRKDYLSQRGLRKILGKRQRLLAYLSKKNRVRYKELINQLNIRELKTR.

The protein belongs to the universal ribosomal protein uS15 family. Part of the 30S ribosomal subunit.

It localises to the plastid. It is found in the chloroplast. This chain is Small ribosomal subunit protein uS15c (rps15), found in Barbarea verna (Land cress).